The primary structure comprises 766 residues: Dipeptidyl peptidase 4 (766 aa).

The Cytoplasmic segment spans residues methionine 1–lysine 6. The chain crosses the membrane as a helical; Signal-anchor for type II membrane protein span at residues valine 7 to leucine 28. Residues asparagine 29–proline 766 are Extracellular-facing. N-linked (GlcNAc...) asparagine glycosylation is found at asparagine 85, asparagine 92, asparagine 150, asparagine 219, asparagine 229, asparagine 281, and asparagine 321. Disulfide bonds link cysteine 328–cysteine 339, cysteine 385–cysteine 394, cysteine 444–cysteine 447, and cysteine 454–cysteine 472. Residue asparagine 520 is glycosylated (N-linked (GlcNAc...) asparagine). Serine 630 acts as the Charge relay system in catalysis. Cysteine 649 and cysteine 762 are disulfide-bonded. Asparagine 685 carries an N-linked (GlcNAc...) asparagine glycan. Active-site charge relay system residues include aspartate 708 and histidine 740.

Belongs to the peptidase S9B family. DPPIV subfamily. Monomer. Homodimer. Heterodimer with Seprase (FAP). Requires homodimerization for optimal dipeptidyl peptidase activity and T-cell costimulation. Found in a membrane raft complex, at least composed of BCL10, CARD11, DPP4 and IKBKB. Associates with collagen. Interacts with PTPRC; the interaction is enhanced in an interleukin-12-dependent manner in activated lymphocytes. Interacts (via extracellular domain) with ADA; does not inhibit its dipeptidyl peptidase activity. Interacts with CAV1 (via the N-terminus); the interaction is direct. Interacts (via cytoplasmic tail) with CARD11 (via PDZ domain); its homodimerization is necessary for interaction with CARD11. Interacts with IGF2R; the interaction is direct. Interacts with GPC3. Interacts with human coronavirus-EMC spike protein and acts as a receptor for this virus. As to quaternary structure, (Microbial infection) Interacts with MERS coronavirus/MERS-CoV spike protein. In terms of processing, the soluble form (Dipeptidyl peptidase 4 soluble form also named SDPP) derives from the membrane form (Dipeptidyl peptidase 4 membrane form also named MDPP) by proteolytic processing. Post-translationally, N- and O-Glycosylated. Phosphorylated. Mannose 6-phosphate residues in the carbohydrate moiety are necessary for interaction with IGF2R in activated T-cells. Mannose 6-phosphorylation is induced during T-cell activation. In terms of tissue distribution, expressed specifically in lymphatic vessels but not in blood vessels in the skin, small intestine, esophagus, ovary, breast and prostate glands. Not detected in lymphatic vessels in the lung, kidney, uterus, liver and stomach (at protein level). Expressed in the poorly differentiated crypt cells of the small intestine as well as in the mature villous cells. Expressed at very low levels in the colon.

The protein resides in the secreted. The protein localises to the cell membrane. Its subcellular location is the apical cell membrane. It is found in the cell projection. It localises to the invadopodium membrane. The protein resides in the lamellipodium membrane. The protein localises to the cell junction. Its subcellular location is the membrane raft. The enzyme catalyses Release of an N-terminal dipeptide, Xaa-Yaa-|-Zaa-, from a polypeptide, preferentially when Yaa is Pro, provided Zaa is neither Pro nor hydroxyproline.. Its activity is regulated as follows. Inhibited by GPC3 and diprotin A. Its function is as follows. Cell surface glycoprotein receptor involved in the costimulatory signal essential for T-cell receptor (TCR)-mediated T-cell activation. Acts as a positive regulator of T-cell coactivation, by binding at least ADA, CAV1, IGF2R, and PTPRC. Its binding to CAV1 and CARD11 induces T-cell proliferation and NF-kappa-B activation in a T-cell receptor/CD3-dependent manner. Its interaction with ADA also regulates lymphocyte-epithelial cell adhesion. In association with FAP is involved in the pericellular proteolysis of the extracellular matrix (ECM), the migration and invasion of endothelial cells into the ECM. May be involved in the promotion of lymphatic endothelial cells adhesion, migration and tube formation. When overexpressed, enhanced cell proliferation, a process inhibited by GPC3. Also acts as a serine exopeptidase with a dipeptidyl peptidase activity that regulates various physiological processes by cleaving peptides in the circulation, including many chemokines, mitogenic growth factors, neuropeptides and peptide hormones such as brain natriuretic peptide 32. Removes N-terminal dipeptides sequentially from polypeptides having unsubstituted N-termini provided that the penultimate residue is proline. In terms of biological role, (Microbial infection) Acts as a receptor for human coronavirus MERS-CoV-2. This Homo sapiens (Human) protein is Dipeptidyl peptidase 4.